The following is a 909-amino-acid chain: MRSPARDATRLGRLATWVVAVIVALIAVSRVTGLVVDWMWFASVGYAGVFRTIFLTQALLFLAVFAVSAGALWLSGWLAHRSASQAQAWRPEVLGQPVGEIAARVPWRAAIAGVAVLVGLLMAVGELSSWAIALRYFHQVPFGKTDPIFAKDIGFYFFTLPAYLALRNWLLLLLGCSAVLAGVVYGLRGDIALVRSPRGLSPAAATHGSALLGLFFALQAWSYWLDRFMLLYGDNGVVVGASYTDVHVGLPVLWLQVGLAAAAAAASWANMRWRDYRVPAAAALLVVGSAIVLGTIWPALFQRFYVKPNELQLETPYLQHNIALTREAYGLTQIEVKPFPVEQNLNLAALQANRPTIDNIRLWDLQPLRDTYAQLQEIRTYYKFLATDIDRYQLGAGYQQVMLSARELEPALIPANAQTWVNLHLLFTHGNGVVMSPVTEKSAEGLPSLYLHDIPPLSDGGPVIQEPRLYFGEGGKGYVIVKGSVPEFDYPKGKDNVYTAYRGRDGIGIGGIARRTLFAWHLGDPNILLSGYITQESRILLHRNIRNRVRTIAPFLSLDHDPYVVVSDGRLYWIQDAYTTSRWFPYSQPGTGGGANYIRNAVKVVIDAYNGTVDFYTSDPADPIVQVYQRIFPGMFRPLGAMSQDLQRHIRYPEDLFLIQARIYRAYHMEAAEVFYNREDLWEFPRQLTGMSTGNTPAARMMPYYMILRLPDEPRAEFVLMLPMVPSQRENMIAWLAARSDPPNYGKLVAYTFPKEKLVYGPFQIEARIQQNTEISQQISLWNQMGSRVIRGHLQVVPIENSILYVSPLYLRAESGQLPELKRVIAAYGDRVVMEDTLGAALAALFKESAPAAIPAQGAANARAREALAHYDRAVERLKAGDWSGFGAELDALRPLLEALGAGAADERK.

7 helical membrane-spanning segments follow: residues 16–36, 58–78, 114–134, 169–189, 205–225, 246–266, and 281–301; these read TWVV…GLVV, ALLF…SGWL, VAVL…AIAL, WLLL…GLRG, ATHG…SYWL, VHVG…AAAA, and AAAL…PALF.

It belongs to the UPF0182 family.

Its subcellular location is the cell membrane. In Cupriavidus necator (strain ATCC 17699 / DSM 428 / KCTC 22496 / NCIMB 10442 / H16 / Stanier 337) (Ralstonia eutropha), this protein is UPF0182 protein H16_A1615.